Reading from the N-terminus, the 69-residue chain is Cytochrome c oxidase subunit 8A, mitochondrial (69 aa).

The transit peptide at 1–25 directs the protein to the mitochondrion; it reads MSSLTPLLLRSLTGPARRLMVPRAQ. An SIFI-degron motif is present at residues 2–19; sequence SSLTPLLLRSLTGPARRL. The Mitochondrial matrix segment spans residues 26 to 36; sequence VHSKPPREQLG. A helical membrane pass occupies residues 37 to 60; the sequence is VLDITIGLTSCFVCCLLPAGWVLS. The Mitochondrial intermembrane segment spans residues 61 to 69; it reads HLESYKKRE.

This sequence belongs to the cytochrome c oxidase VIII family. Component of the cytochrome c oxidase (complex IV, CIV), a multisubunit enzyme composed of 14 subunits. The complex is composed of a catalytic core of 3 subunits MT-CO1, MT-CO2 and MT-CO3, encoded in the mitochondrial DNA, and 11 supernumerary subunits COX4I, COX5A, COX5B, COX6A, COX6B, COX6C, COX7A, COX7B, COX7C, COX8 and NDUFA4, which are encoded in the nuclear genome. The complex exists as a monomer or a dimer and forms supercomplexes (SCs) in the inner mitochondrial membrane with NADH-ubiquinone oxidoreductase (complex I, CI) and ubiquinol-cytochrome c oxidoreductase (cytochrome b-c1 complex, complex III, CIII), resulting in different assemblies (supercomplex SCI(1)III(2)IV(1) and megacomplex MCI(2)III(2)IV(2)). Post-translationally, in response to mitochondrial stress, the precursor protein is ubiquitinated by the SIFI complex in the cytoplasm before mitochondrial import, leading to its degradation. Within the SIFI complex, UBR4 initiates ubiquitin chain that are further elongated or branched by KCMF1.

It localises to the mitochondrion inner membrane. The protein operates within energy metabolism; oxidative phosphorylation. Functionally, component of the cytochrome c oxidase, the last enzyme in the mitochondrial electron transport chain which drives oxidative phosphorylation. The respiratory chain contains 3 multisubunit complexes succinate dehydrogenase (complex II, CII), ubiquinol-cytochrome c oxidoreductase (cytochrome b-c1 complex, complex III, CIII) and cytochrome c oxidase (complex IV, CIV), that cooperate to transfer electrons derived from NADH and succinate to molecular oxygen, creating an electrochemical gradient over the inner membrane that drives transmembrane transport and the ATP synthase. Cytochrome c oxidase is the component of the respiratory chain that catalyzes the reduction of oxygen to water. Electrons originating from reduced cytochrome c in the intermembrane space (IMS) are transferred via the dinuclear copper A center (CU(A)) of subunit 2 and heme A of subunit 1 to the active site in subunit 1, a binuclear center (BNC) formed by heme A3 and copper B (CU(B)). The BNC reduces molecular oxygen to 2 water molecules using 4 electrons from cytochrome c in the IMS and 4 protons from the mitochondrial matrix. The chain is Cytochrome c oxidase subunit 8A, mitochondrial (Cox8a) from Rattus norvegicus (Rat).